The chain runs to 299 residues: Rhodanese-like/PpiC domain-containing protein 12, chloroplastic (299 aa).

The N-terminal 81 residues, 1 to 81, are a transit peptide targeting the chloroplast; the sequence is MFRVTGTLSA…SGFPALKMRA (81 aa). Ser82 carries the N-acetylserine modification. In terms of domain architecture, PpiC spans 93 to 183; it reads SREILVQHLL…FGLHLLQVLS (91 aa). Residues 205 to 297 form the Rhodanese domain; sequence FMDEAQLIDV…YSLKVDPSIP (93 aa). Catalysis depends on Cys257, which acts as the Cysteine persulfide intermediate.

Its subcellular location is the plastid. The protein localises to the chloroplast. The chain is Rhodanese-like/PpiC domain-containing protein 12, chloroplastic from Arabidopsis thaliana (Mouse-ear cress).